We begin with the raw amino-acid sequence, 515 residues long: Putative ribose/galactose/methyl galactoside import ATP-binding protein (515 aa).

2 consecutive ABC transporter domains span residues 25 to 261 and 268 to 515; these read LEVL…VGRE and LREK…SGLN. 57-64 contributes to the ATP binding site; that stretch reads GENGAGKS.

Belongs to the ABC transporter superfamily. Carbohydrate importer 2 (CUT2) (TC 3.A.1.2) family.

Its subcellular location is the cell inner membrane. The enzyme catalyses D-ribose(out) + ATP + H2O = D-ribose(in) + ADP + phosphate + H(+). The catalysed reaction is D-galactose(out) + ATP + H2O = D-galactose(in) + ADP + phosphate + H(+). In terms of biological role, part of an ABC transporter complex involved in carbohydrate import. Could be involved in ribose, galactose and/or methyl galactoside import. Responsible for energy coupling to the transport system. The polypeptide is Putative ribose/galactose/methyl galactoside import ATP-binding protein (Pseudomonas fluorescens (strain ATCC BAA-477 / NRRL B-23932 / Pf-5)).